A 641-amino-acid chain; its full sequence is Chaperone protein HtpG (641 aa).

Residues 1 to 348 form an a; substrate-binding region; the sequence is MTTATEKQTL…SNDLSLNVSR (348 aa). The interval 349-565 is b; the sequence is EILQNDKAVE…AYDMGVQMRR (217 aa). The segment at 566–641 is c; that stretch reads IMEAAGQALP…KLLLELSNAG (76 aa).

The protein belongs to the heat shock protein 90 family. In terms of assembly, homodimer.

The protein localises to the cytoplasm. Molecular chaperone. Has ATPase activity. In Hahella chejuensis (strain KCTC 2396), this protein is Chaperone protein HtpG.